A 367-amino-acid chain; its full sequence is Pantothenate kinase CAB1 (367 aa).

Belongs to the type II pantothenate kinase family.

It is found in the cytoplasm. The protein resides in the nucleus. The enzyme catalyses (R)-pantothenate + ATP = (R)-4'-phosphopantothenate + ADP + H(+). Its pathway is cofactor biosynthesis; coenzyme A biosynthesis; CoA from (R)-pantothenate: step 1/5. Its activity is regulated as follows. Regulated by feedback inhibition by malonyl-CoA. Its function is as follows. Plays a role in the physiological regulation of the intracellular CoA concentration. This is Pantothenate kinase CAB1 (CAB1) from Saccharomyces cerevisiae (strain ATCC 204508 / S288c) (Baker's yeast).